Consider the following 266-residue polypeptide: Imidazole glycerol phosphate synthase subunit HisF (266 aa).

Residues Asp11 and Asp130 contribute to the active site.

It belongs to the HisA/HisF family. As to quaternary structure, heterodimer of HisH and HisF.

The protein localises to the cytoplasm. The enzyme catalyses 5-[(5-phospho-1-deoxy-D-ribulos-1-ylimino)methylamino]-1-(5-phospho-beta-D-ribosyl)imidazole-4-carboxamide + L-glutamine = D-erythro-1-(imidazol-4-yl)glycerol 3-phosphate + 5-amino-1-(5-phospho-beta-D-ribosyl)imidazole-4-carboxamide + L-glutamate + H(+). It participates in amino-acid biosynthesis; L-histidine biosynthesis; L-histidine from 5-phospho-alpha-D-ribose 1-diphosphate: step 5/9. Functionally, IGPS catalyzes the conversion of PRFAR and glutamine to IGP, AICAR and glutamate. The HisF subunit catalyzes the cyclization activity that produces IGP and AICAR from PRFAR using the ammonia provided by the HisH subunit. This chain is Imidazole glycerol phosphate synthase subunit HisF, found in Delftia acidovorans (strain DSM 14801 / SPH-1).